Here is a 144-residue protein sequence, read N- to C-terminus: uncharacterized protein (144 aa).

An N-terminal signal peptide occupies residues 1–23 (MVIPLRNKYGILFLIAVCIMVSG). Residues 119 to 144 (QNGQRKTMTRIESKTGREEKDEKSKS) are disordered. Basic and acidic residues predominate over residues 127–144 (TRIESKTGREEKDEKSKS).

This is an uncharacterized protein from Bacillus subtilis (strain 168).